The primary structure comprises 478 residues: uncharacterized protein (478 aa).

Residues 2 to 120 (MNMITVIGFG…NIDKIINILE (119 aa)) form the RCK N-terminal domain.

This is an uncharacterized protein from Methanocaldococcus jannaschii (strain ATCC 43067 / DSM 2661 / JAL-1 / JCM 10045 / NBRC 100440) (Methanococcus jannaschii).